The sequence spans 744 residues: Dual specificity protein kinase shkD (744 aa).

The interval 1–276 (MKRFFSNLFK…SGPPEILPEE (276 aa)) is disordered. Low complexity-rich tracts occupy residues 25–70 (PTTS…NSNQ), 79–107 (SPSTNQTQTPSNNTISTSPTVTTQPSFTP), and 127–200 (TSTT…QTAS). Over residues 201-210 (VNHTSSDQSL) the composition is skewed to polar residues. Low complexity predominate over residues 211-236 (NAQNVTQTNNNNNNNNNNNNNNNANN). A Protein kinase domain is found at 277 to 534 (IDRTDFLGQG…EILFRLNEIL (258 aa)). ATP contacts are provided by residues 283–291 (LGQGSFGSV) and Lys304. Residue Asp400 is the Proton acceptor of the active site. Residues 641–734 (WFHGDIVREQ…LVPCPKFTQE (94 aa)) form the SH2 domain.

It belongs to the protein kinase superfamily. Ser/Thr protein kinase family. SH2 domain-containing protein kinase subfamily.

Its subcellular location is the membrane. It catalyses the reaction L-seryl-[protein] + ATP = O-phospho-L-seryl-[protein] + ADP + H(+). The catalysed reaction is L-threonyl-[protein] + ATP = O-phospho-L-threonyl-[protein] + ADP + H(+). Functionally, required for proper chemotaxis and phagocytosis; proper spatiotemporal control of F-actin levels in chemotaxing cells. Negative regulator of the PI3K (phosphatidylinositol 3 kinase) pathway. Predominantly phosphorylates serines and threonines and tyrosines at a lower level. In Dictyostelium discoideum (Social amoeba), this protein is Dual specificity protein kinase shkD (shkD).